The sequence spans 478 residues: Dynein regulatory complex subunit 4 (478 aa).

The segment covering 1–12 (MAPKRRGKKGKA) has biased composition (basic residues). The interval 1–32 (MAPKRRGKKGKAKGNAVVDGVAPEDMSKEQVE) is disordered. Residues 1–114 (MAPKRRGKKG…LLYEHQNNLA (114 aa)) are regulates microtubule-binding. 2 coiled-coil regions span residues 24–201 (EDMS…DELD) and 243–427 (NNLA…LARV). Residues 115-258 (EVKTEGTVVM…NSLKEQMEDM (144 aa)) are microtubule-binding. The interaction with SMO stretch occupies residues 357–478 (QQKTGFKNLV…GPAGLVGAPT (122 aa)).

Belongs to the DRC4 family. In terms of assembly, component of the nexin-dynein regulatory complex (N-DRC). Interacts with microtubules. Interacts with SMO. Interacts (via coiled-coil domains) with RAB3B (in GTP-bound form). Interacts with DRC1. Interacts with DRC7.

Its subcellular location is the cytoplasm. It is found in the cytoskeleton. It localises to the cell projection. The protein resides in the cilium. The protein localises to the flagellum. Its subcellular location is the cilium axoneme. It is found in the cilium basal body. It localises to the golgi apparatus. The protein resides in the flagellum axoneme. Functionally, component of the nexin-dynein regulatory complex (N-DRC), a key regulator of ciliary/flagellar motility which maintains the alignment and integrity of the distal axoneme and regulates microtubule sliding in motile axonemes. Plays an important role in the assembly of the N-DRC linker. Plays dual roles at both the primary (or non-motile) cilia to regulate hedgehog signaling and in motile cilia to coordinate cilia movement. Required for proper motile cilia functioning. Positively regulates ciliary smoothened (SMO)-dependent Hedgehog (Hh) signaling pathway by facilitating the trafficking of SMO into the cilium and the stimulation of SMO activity in a GRK2-dependent manner. This Rattus norvegicus (Rat) protein is Dynein regulatory complex subunit 4 (Gas8).